The chain runs to 379 residues: Ascochitine biosynthesis cluster protein 8 (379 aa).

3 helical membrane passes run 87-107, 116-136, and 141-161; these read ELIA…LDLE, VGPV…VAAC, and IKVF…VVAL.

It localises to the membrane. It functions in the pathway mycotoxin biosynthesis. Part of the gene cluster that mediates the biosynthesis of the selective antifungal agent ascochitine, an o-quinone methide that plays a possible protective role against other microbial competitors in nature and is considered to be important for pathogenicity of legume-associated Didymella species. The pathway probably begins with the synthesis of a keto-aldehyde intermediate by the ascochitine non-reducing polyketide synthase pksAC from successive condensations of 4 malonyl-CoA units, presumably with a simple acetyl-CoA starter unit. Release of the keto-aldehyde intermediate is consistent with the presence of the C-terminal reductive release domain. The HR-PKS (orf7) probably makes a diketide starter unit which is passed to the non-reducing polyketide synthase pksAC for further extension, producing ascochital and ascochitine. The aldehyde dehydrogenase (orf1), the 2-oxoglutarate-dependent dioxygenase (orf3) and the dehydrogenase (orf9) are probably involved in subsequent oxidations of methyl groups to the carboxylic acid of the heterocyclic ring. The ascochitine gene cluster also includes a gene encoding a short peptide with a cupin domain (orf2) that is often found in secondary metabolite gene clusters and which function has still to be determined. This chain is Ascochitine biosynthesis cluster protein 8, found in Didymella fabae (Leaf and pod spot disease fungus).